Here is a 306-residue protein sequence, read N- to C-terminus: 3-methyl-2-oxobutanoate hydroxymethyltransferase (306 aa).

Mg(2+) is bound by residues Asp53 and Asp96. Residues 53–54, Asp96, and Lys126 contribute to the 3-methyl-2-oxobutanoate site; that span reads DS. A Mg(2+)-binding site is contributed by Glu128. Glu195 functions as the Proton acceptor in the catalytic mechanism.

It belongs to the PanB family. As to quaternary structure, homodecamer; pentamer of dimers. The cofactor is Mg(2+).

The protein localises to the cytoplasm. The catalysed reaction is 3-methyl-2-oxobutanoate + (6R)-5,10-methylene-5,6,7,8-tetrahydrofolate + H2O = 2-dehydropantoate + (6S)-5,6,7,8-tetrahydrofolate. Its pathway is cofactor biosynthesis; (R)-pantothenate biosynthesis; (R)-pantoate from 3-methyl-2-oxobutanoate: step 1/2. Functionally, catalyzes the reversible reaction in which hydroxymethyl group from 5,10-methylenetetrahydrofolate is transferred onto alpha-ketoisovalerate to form ketopantoate. The sequence is that of 3-methyl-2-oxobutanoate hydroxymethyltransferase from Anaeromyxobacter dehalogenans (strain 2CP-1 / ATCC BAA-258).